A 251-amino-acid polypeptide reads, in one-letter code: Triosephosphate isomerase (251 aa).

9 to 11 contributes to the substrate binding site; that stretch reads NWK. The active-site Electrophile is histidine 94. Glutamate 166 (proton acceptor) is an active-site residue. Substrate-binding positions include glycine 172, serine 211, and 232–233; that span reads GG.

It belongs to the triosephosphate isomerase family. Homodimer.

The protein resides in the cytoplasm. The enzyme catalyses D-glyceraldehyde 3-phosphate = dihydroxyacetone phosphate. The protein operates within carbohydrate biosynthesis; gluconeogenesis. Its pathway is carbohydrate degradation; glycolysis; D-glyceraldehyde 3-phosphate from glycerone phosphate: step 1/1. In terms of biological role, involved in the gluconeogenesis. Catalyzes stereospecifically the conversion of dihydroxyacetone phosphate (DHAP) to D-glyceraldehyde-3-phosphate (G3P). The chain is Triosephosphate isomerase from Xanthomonas axonopodis pv. citri (strain 306).